Reading from the N-terminus, the 187-residue chain is Oligoribonuclease (187 aa).

Residues 7–170 enclose the Exonuclease domain; that stretch reads LCWLDMEMTG…DDILESIEEM (164 aa). Tyr128 is an active-site residue.

Belongs to the oligoribonuclease family.

It localises to the cytoplasm. In terms of biological role, 3'-to-5' exoribonuclease specific for small oligoribonucleotides. In Neisseria meningitidis serogroup B (strain ATCC BAA-335 / MC58), this protein is Oligoribonuclease.